Reading from the N-terminus, the 195-residue chain is Glycerol-3-phosphate acyltransferase (195 aa).

6 helical membrane-spanning segments follow: residues 4–24 (GLIL…GLLL), 53–73 (GLAA…VLIA), 80–100 (TAVW…WLGF), 110–130 (LGVL…IWLA), 133–153 (FLFR…PIAL), and 154–174 (YFLS…IVFI).

Belongs to the PlsY family. Probably interacts with PlsX.

The protein resides in the cell inner membrane. The catalysed reaction is an acyl phosphate + sn-glycerol 3-phosphate = a 1-acyl-sn-glycero-3-phosphate + phosphate. It participates in lipid metabolism; phospholipid metabolism. In terms of biological role, catalyzes the transfer of an acyl group from acyl-phosphate (acyl-PO(4)) to glycerol-3-phosphate (G3P) to form lysophosphatidic acid (LPA). This enzyme utilizes acyl-phosphate as fatty acyl donor, but not acyl-CoA or acyl-ACP. The chain is Glycerol-3-phosphate acyltransferase from Mesorhizobium japonicum (strain LMG 29417 / CECT 9101 / MAFF 303099) (Mesorhizobium loti (strain MAFF 303099)).